The primary structure comprises 425 residues: Inositol hexakisphosphate kinase 2 (425 aa).

Residues 206–208 (ENL) and aspartate 219 each bind ATP. Residues 215–223 (PCVLDLKMG), lysine 221, and 235–242 (KAANQIRK) each bind substrate. Residue aspartate 382 coordinates ATP. Histidine 385 is a binding site for substrate.

Belongs to the inositol phosphokinase (IPK) family. In terms of tissue distribution, detected in kidney, intestine, liver and heart.

It is found in the nucleus. It catalyses the reaction 1D-myo-inositol hexakisphosphate + ATP = 5-diphospho-1D-myo-inositol 1,2,3,4,6-pentakisphosphate + ADP. It participates in phospholipid metabolism; phosphatidylinositol metabolism. Converts inositol hexakisphosphate (InsP6) to diphosphoinositol pentakisphosphate (InsP7/PP-InsP5). The polypeptide is Inositol hexakisphosphate kinase 2 (IP6K2) (Oryctolagus cuniculus (Rabbit)).